An 865-amino-acid chain; its full sequence is Taste receptor type 1 member 3 (865 aa).

The N-terminal stretch at 1 to 24 (MPGLALLGLTALLGLTALLDHGEG) is a signal peptide. At 25–573 (ATSCLSQQLR…FLAWGEPAVL (549 aa)) the chain is on the extracellular side. N-linked (GlcNAc...) asparagine glycosylation is found at N134 and N267. The chain crosses the membrane as a helical span at residues 574–594 (LLLALLALALGLALAALGLFL). Residues 595–606 (WHSDSPLVQASG) lie on the Cytoplasmic side of the membrane. Residues 607–627 (GPRACFGLACLGLVCLSVLLF) traverse the membrane as a helical segment. Residues 628 to 642 (PGQPGPASCLAQQPL) are Extracellular-facing. A helical membrane pass occupies residues 643–663 (FHLPLTGCLSTFFLQAAEIFV). Residues 664–685 (GSELPPSWAEKMRGRLRGPWAW) lie on the Cytoplasmic side of the membrane. The helical transmembrane segment at 686 to 706 (LVVLLAMLAEAALCAWYLVAF) threads the bilayer. Over 707–732 (PPEVVTDWRVLPTEALVHCHVHSWIS) the chain is Extracellular. Residues 733–753 (FGLVHATNAMLAFLCFLGTFL) traverse the membrane as a helical segment. The Cytoplasmic portion of the chain corresponds to 754-765 (VQSRPGRYNGAR). The chain crosses the membrane as a helical span at residues 766-786 (GLTFAMLAYFITWISFVPLFA). Residues 787 to 794 (NVHVAYQP) lie on the Extracellular side of the membrane. A helical transmembrane segment spans residues 795–815 (AVQMGTILLCALGILATFHLP). Topologically, residues 816-865 (KCYLLLQRPELNTPEFFLEDNARAQGSSWGQGRGESGQKQVTPDPVTSPQ) are cytoplasmic. Residues 840–865 (QGSSWGQGRGESGQKQVTPDPVTSPQ) are disordered. The span at 852 to 865 (GQKQVTPDPVTSPQ) shows a compositional bias: polar residues.

The protein belongs to the G-protein coupled receptor 3 family. TAS1R subfamily. In terms of assembly, forms homodimers or a heterodimer with TAS1R1. In terms of tissue distribution, expressed in taste buds.

Its subcellular location is the cell membrane. Its function is as follows. Putative taste receptor. TAS1R1/TAS1R3 responds to the umami taste stimulus (the taste of monosodium glutamate). The protein is Taste receptor type 1 member 3 (TAS1R3) of Felis catus (Cat).